Reading from the N-terminus, the 95-residue chain is Small ribosomal subunit protein bS16 (95 aa).

The protein belongs to the bacterial ribosomal protein bS16 family.

The polypeptide is Small ribosomal subunit protein bS16 (Thermosipho melanesiensis (strain DSM 12029 / CIP 104789 / BI429)).